The following is a 163-amino-acid chain: ATP synthase subunit b 1 (163 aa).

Residues 7–27 (AETWVAVAFVILMALFAYLGV) traverse the membrane as a helical segment.

The protein belongs to the ATPase B chain family. In terms of assembly, F-type ATPases have 2 components, F(1) - the catalytic core - and F(0) - the membrane proton channel. F(1) has five subunits: alpha(3), beta(3), gamma(1), delta(1), epsilon(1). F(0) has three main subunits: a(1), b(2) and c(10-14). The alpha and beta chains form an alternating ring which encloses part of the gamma chain. F(1) is attached to F(0) by a central stalk formed by the gamma and epsilon chains, while a peripheral stalk is formed by the delta and b chains.

It localises to the cell inner membrane. F(1)F(0) ATP synthase produces ATP from ADP in the presence of a proton or sodium gradient. F-type ATPases consist of two structural domains, F(1) containing the extramembraneous catalytic core and F(0) containing the membrane proton channel, linked together by a central stalk and a peripheral stalk. During catalysis, ATP synthesis in the catalytic domain of F(1) is coupled via a rotary mechanism of the central stalk subunits to proton translocation. Functionally, component of the F(0) channel, it forms part of the peripheral stalk, linking F(1) to F(0). The chain is ATP synthase subunit b 1 from Rhodopseudomonas palustris (strain BisB5).